The following is a 61-amino-acid chain: Temporin-ALi (61 aa).

Positions 1–22 (MFPLKKSLLLLFFLATINLSLC) are cleaved as a signal peptide. The propeptide occupies 23–46 (EQERNAEEERRDEPDERNAEVEKR). Leucine amide is present on L59.

The protein belongs to the frog skin active peptide (FSAP) family. Temporin subfamily. Expressed by the skin glands.

It localises to the secreted. Its function is as follows. Antimicrobial peptide with activity against Gram-positive and Gram-negative bacteria and against fungi. Has been tested against S.aureus (MIC=7.5 ug/mL), B.pumilus (MIC=7.5 ug/mL), B.cereus (MIC=75.0 ug/mL), E.coli (MIC=7.5 ug/mL), B.dysenteriae (MIC=20.0 ug/mL), A.cacoaceticus (MIC=60.0 ug/mL), P.aeruginosa (MIC=5.0 ug/mL) and C.albicans (MIC=5.0 ug/mL). Also shows a weak hemolytic activity. This Amolops loloensis (Lolokou Sucker Frog) protein is Temporin-ALi.